The chain runs to 76 residues: Conotoxin PnMKLT1-1111 (76 aa).

The N-terminal stretch at 1–22 (MKLTCMMIVAVLFLTAWTVVTA) is a signal peptide. Residues 23 to 50 (VPHSNKRLANLYLKARHEMKNPEASNVD) constitute a propeptide that is removed on maturation. Cystine bridges form between C53/C67, C60/C71, and C66/C75.

It belongs to the conotoxin O1 superfamily. In terms of tissue distribution, expressed by the venom duct.

It localises to the secreted. The protein is Conotoxin PnMKLT1-1111 of Conus pennaceus (Feathered cone).